The sequence spans 739 residues: Long-chain-fatty-acid--CoA ligase ACSBG2 (739 aa).

ATP-binding positions include T287–K295, E478–S483, D556, R571, and K684.

The protein belongs to the ATP-dependent AMP-binding enzyme family. Bubblegum subfamily.

The protein resides in the cytoplasm. The enzyme catalyses a long-chain fatty acid + ATP + CoA = a long-chain fatty acyl-CoA + AMP + diphosphate. It catalyses the reaction (5Z,8Z,11Z,14Z)-eicosatetraenoate + ATP + CoA = (5Z,8Z,11Z,14Z)-eicosatetraenoyl-CoA + AMP + diphosphate. The catalysed reaction is hexadecanoate + ATP + CoA = hexadecanoyl-CoA + AMP + diphosphate. It carries out the reaction (9Z)-octadecenoate + ATP + CoA = (9Z)-octadecenoyl-CoA + AMP + diphosphate. The enzyme catalyses (9Z,12Z)-octadecadienoate + ATP + CoA = (9Z,12Z)-octadecadienoyl-CoA + AMP + diphosphate. It catalyses the reaction tetracosanoate + ATP + CoA = tetracosanoyl-CoA + AMP + diphosphate. In terms of biological role, catalyzes the conversion of fatty acids such as long chain and very long-chain fatty acids to their active form acyl-CoAs for both synthesis of cellular lipids, and degradation via beta-oxidation. Can activate diverse saturated, monosaturated and polyunsaturated fatty acids. In Xenopus laevis (African clawed frog), this protein is Long-chain-fatty-acid--CoA ligase ACSBG2.